Here is a 742-residue protein sequence, read N- to C-terminus: Ferric enterobactin receptor PirA (742 aa).

A signal peptide spans 1 to 28; it reads MYPQFRRGHLAAAVLFASSSLLGGQALA. Residues 57-184 form the TBDR plug domain; the sequence is QELKQAPGVS…AGGVVNIITK (128 aa). Disordered stretches follow at residues 91–112 and 409–435; these read GVNL…IDIR and SSLK…PKSK. The span at 94-108 shows a compositional bias: polar residues; that stretch reads LTGNSSSGQRGNNRQ. Positions 189-742 constitute a TBDR beta-barrel domain; sequence RLRGSMTVFT…AYYVSMTTSF (554 aa). Residues Cys516 and Cys525 are joined by a disulfide bond. The TonB C-terminal box signature appears at 725–742; the sequence is ATYNEPGRAYYVSMTTSF.

This sequence belongs to the TonB-dependent receptor family.

The protein resides in the cell outer membrane. In terms of biological role, specific receptor for the siderophore ferric enterobactin. Probably involved in the transport of siderophores, including host catecholamines such as L-DOPA. This Pseudomonas aeruginosa (strain ATCC 15692 / DSM 22644 / CIP 104116 / JCM 14847 / LMG 12228 / 1C / PRS 101 / PAO1) protein is Ferric enterobactin receptor PirA.